Here is a 96-residue protein sequence, read N- to C-terminus: Large ribosomal subunit protein uL23 (96 aa).

Belongs to the universal ribosomal protein uL23 family. Part of the 50S ribosomal subunit. Contacts protein L29, and trigger factor when it is bound to the ribosome.

Functionally, one of the early assembly proteins it binds 23S rRNA. One of the proteins that surrounds the polypeptide exit tunnel on the outside of the ribosome. Forms the main docking site for trigger factor binding to the ribosome. The sequence is that of Large ribosomal subunit protein uL23 from Clostridioides difficile (strain 630) (Peptoclostridium difficile).